The following is a 119-amino-acid chain: Fluoride-specific ion channel FluC 2 (119 aa).

Residues 46 to 66 form a helical membrane-spanning segment; it reads FALGLLTFAGVTGDAALLVGV. Na(+)-binding residues include G70 and T73. The helical transmembrane segment at 96–116 threads the bilayer; the sequence is LNAVGNLACALVGIGLAWGIV.

It belongs to the fluoride channel Fluc/FEX (TC 1.A.43) family.

Its subcellular location is the cell membrane. The catalysed reaction is fluoride(in) = fluoride(out). Its activity is regulated as follows. Na(+) is not transported, but it plays an essential structural role and its presence is essential for fluoride channel function. Functionally, fluoride-specific ion channel. Important for reducing fluoride concentration in the cell, thus reducing its toxicity. The polypeptide is Fluoride-specific ion channel FluC 2 (Haloarcula marismortui (strain ATCC 43049 / DSM 3752 / JCM 8966 / VKM B-1809) (Halobacterium marismortui)).